The primary structure comprises 130 residues: Small ribosomal subunit protein uS8 (130 aa).

Belongs to the universal ribosomal protein uS8 family. Part of the 30S ribosomal subunit. Contacts proteins S5 and S12.

In terms of biological role, one of the primary rRNA binding proteins, it binds directly to 16S rRNA central domain where it helps coordinate assembly of the platform of the 30S subunit. This Cellvibrio japonicus (strain Ueda107) (Pseudomonas fluorescens subsp. cellulosa) protein is Small ribosomal subunit protein uS8.